Reading from the N-terminus, the 374-residue chain is Conserved virulence factor C (374 aa).

The protein belongs to the CvfC family.

Functionally, required for hemolysin production. Contributes to virulence in both silkworm-infection model and mice. This Staphylococcus aureus (strain NCTC 8325 / PS 47) protein is Conserved virulence factor C (cvfC).